The primary structure comprises 102 residues: UPF0473 protein SAS1551 (102 aa).

Belongs to the UPF0473 family.

The sequence is that of UPF0473 protein SAS1551 from Staphylococcus aureus (strain MSSA476).